The primary structure comprises 351 residues: Protein-glutamate methylesterase/protein-glutamine glutaminase 2 (351 aa).

The Response regulatory domain occupies 5-122; the sequence is RVICVDDSAL…RDGLLDYSEL (118 aa). Position 56 is a 4-aspartylphosphate (Asp56). The region spanning 154-341 is the CheB-type methylesterase domain; the sequence is LNSSEKLVIL…PLPAMSERIL (188 aa). Active-site residues include Ser166, His192, and Asp289.

The protein belongs to the CheB family. Post-translationally, phosphorylated by CheA. Phosphorylation of the N-terminal regulatory domain activates the methylesterase activity.

It localises to the cytoplasm. The catalysed reaction is [protein]-L-glutamate 5-O-methyl ester + H2O = L-glutamyl-[protein] + methanol + H(+). The enzyme catalyses L-glutaminyl-[protein] + H2O = L-glutamyl-[protein] + NH4(+). Functionally, involved in chemotaxis. Part of a chemotaxis signal transduction system that modulates chemotaxis in response to various stimuli. Catalyzes the demethylation of specific methylglutamate residues introduced into the chemoreceptors (methyl-accepting chemotaxis proteins or MCP) by CheR. Also mediates the irreversible deamidation of specific glutamine residues to glutamic acid. The chain is Protein-glutamate methylesterase/protein-glutamine glutaminase 2 from Bordetella avium (strain 197N).